We begin with the raw amino-acid sequence, 354 residues long: Protein-arginine kinase (354 aa).

The Phosphagen kinase C-terminal domain maps to 24 to 254; the sequence is IVLSSRIRLA…QQIIQQEKMA (231 aa). ATP contacts are provided by residues 27 to 31, His92, Arg125, 176 to 180, and 207 to 212; these read SSRIR, RASVM, and RGIYGE. The RDXXRA motif of the pArg binding pocket involved in allosteric regulation motif lies at 337–342; the sequence is RDYRRA.

It belongs to the ATP:guanido phosphotransferase family.

It carries out the reaction L-arginyl-[protein] + ATP = N(omega)-phospho-L-arginyl-[protein] + ADP + H(+). Appears to be allosterically activated by the binding of pArg-containing polypeptides to the pArg-binding pocket localized in the C-terminal domain of McsB. In terms of biological role, catalyzes the specific phosphorylation of arginine residues in a large number of proteins. Is part of the bacterial stress response system. Protein arginine phosphorylation has a physiologically important role and is involved in the regulation of many critical cellular processes, such as protein homeostasis, motility, competence, and stringent and stress responses, by regulating gene expression and protein activity. This is Protein-arginine kinase from Bacillus cereus (strain AH187).